Reading from the N-terminus, the 212-residue chain is Glycerol-3-phosphate acyltransferase (212 aa).

4 helical membrane passes run 3-23 (ILLA…VVVS), 78-98 (DVAV…PVFF), 115-135 (AVHP…AFFF), and 155-177 (FLFG…LLVW).

Belongs to the PlsY family. Probably interacts with PlsX.

The protein resides in the cell inner membrane. The enzyme catalyses an acyl phosphate + sn-glycerol 3-phosphate = a 1-acyl-sn-glycero-3-phosphate + phosphate. It functions in the pathway lipid metabolism; phospholipid metabolism. Its function is as follows. Catalyzes the transfer of an acyl group from acyl-phosphate (acyl-PO(4)) to glycerol-3-phosphate (G3P) to form lysophosphatidic acid (LPA). This enzyme utilizes acyl-phosphate as fatty acyl donor, but not acyl-CoA or acyl-ACP. The sequence is that of Glycerol-3-phosphate acyltransferase from Burkholderia ambifaria (strain ATCC BAA-244 / DSM 16087 / CCUG 44356 / LMG 19182 / AMMD) (Burkholderia cepacia (strain AMMD)).